A 671-amino-acid chain; its full sequence is UvrABC system protein B (671 aa).

The region spanning 25 to 412 (EGIDAGLAHQ…AGRIVEQVVR (388 aa)) is the Helicase ATP-binding domain. 38–45 (GVTGSGKT) is an ATP binding site. Residues 91 to 114 (YYDYYQPEAYVPSSDTFIEKDASI) carry the Beta-hairpin motif. The Helicase C-terminal domain maps to 429–582 (QVDDLLSEIH…QIAFNLEHGI (154 aa)). The disordered stretch occupies residues 601–625 (PGSRSKKRKGMAKAAEESARYENEL). Residues 614-625 (AAEESARYENEL) are compositionally biased toward basic and acidic residues. The region spanning 632-667 (NKRIRQLEEKMYQLARDLEFEAAAQMRDEIGKLRER) is the UVR domain.

The protein belongs to the UvrB family. Forms a heterotetramer with UvrA during the search for lesions. Interacts with UvrC in an incision complex.

The protein resides in the cytoplasm. Functionally, the UvrABC repair system catalyzes the recognition and processing of DNA lesions. A damage recognition complex composed of 2 UvrA and 2 UvrB subunits scans DNA for abnormalities. Upon binding of the UvrA(2)B(2) complex to a putative damaged site, the DNA wraps around one UvrB monomer. DNA wrap is dependent on ATP binding by UvrB and probably causes local melting of the DNA helix, facilitating insertion of UvrB beta-hairpin between the DNA strands. Then UvrB probes one DNA strand for the presence of a lesion. If a lesion is found the UvrA subunits dissociate and the UvrB-DNA preincision complex is formed. This complex is subsequently bound by UvrC and the second UvrB is released. If no lesion is found, the DNA wraps around the other UvrB subunit that will check the other stand for damage. The polypeptide is UvrABC system protein B (Pseudomonas syringae pv. tomato (strain ATCC BAA-871 / DC3000)).